We begin with the raw amino-acid sequence, 209 residues long: ADP-ribose pyrophosphatase (209 aa).

Substrate is bound by residues 28–29 (FF), 51–52 (RE), Arg-56, and Arg-79. The 139-residue stretch at 55–193 (ERGHAAVLLP…KIDNAASVIA (139 aa)) folds into the Nudix hydrolase domain. Position 96 (Ala-96) interacts with Mg(2+). Residues 97 to 118 (GMIEEGESVEDVARREAIEEAG) carry the Nudix box motif. Met-98 contributes to the substrate binding site. 2 residues coordinate Mg(2+): Glu-112 and Glu-116. Residues 133-135 (SPG) and Glu-139 contribute to the substrate site. Glu-162 acts as the Proton acceptor in catalysis. Residue Glu-164 coordinates Mg(2+).

Belongs to the Nudix hydrolase family. NudF subfamily. As to quaternary structure, homodimer. Requires Mg(2+) as cofactor.

The enzyme catalyses ADP-D-ribose + H2O = D-ribose 5-phosphate + AMP + 2 H(+). Its activity is regulated as follows. Inhibited by phosphorylated compounds such as AMP, ADP, ATP, 3-phosphoglyceric acid and PPi. Not inhibited by orthophosphate. Activity is high in cells grown in low glucose concentrations and decreases dramatically as glucose concentration increases. In terms of biological role, acts on ADP-mannose and ADP-glucose as well as ADP-ribose. Prevents glycogen biosynthesis. The reaction catalyzed by this enzyme is a limiting step of the gluconeogenic process. This is ADP-ribose pyrophosphatase (nudF) from Escherichia coli O157:H7.